The chain runs to 306 residues: Polyisoprenyl-teichoic acid--peptidoglycan teichoic acid transferase TagU (306 aa).

The Cytoplasmic segment spans residues 1–11 (MRAEKRKKKKK). A helical; Signal-anchor for type II membrane protein transmembrane segment spans residues 12–32 (ILYTIIALIGIFVLSTGSYAY). Over 33-306 (YLWHKAASTV…TAELKESLNK (274 aa)) the chain is Extracellular.

This sequence belongs to the LytR/CpsA/Psr (LCP) family.

It is found in the cell membrane. The protein operates within cell wall biogenesis. Its function is as follows. May catalyze the final step in cell wall teichoic acid biosynthesis, the transfer of the anionic cell wall polymers (APs) from their lipid-linked precursor to the cell wall peptidoglycan (PG). This Bacillus licheniformis (strain ATCC 14580 / DSM 13 / JCM 2505 / CCUG 7422 / NBRC 12200 / NCIMB 9375 / NCTC 10341 / NRRL NRS-1264 / Gibson 46) protein is Polyisoprenyl-teichoic acid--peptidoglycan teichoic acid transferase TagU.